A 161-amino-acid chain; its full sequence is Allophycocyanin beta subunit (161 aa).

Asparagine 71 carries the N4-methylasparagine modification. Residue cysteine 81 coordinates (2R,3E)-phycocyanobilin.

The protein belongs to the phycobiliprotein family. As to quaternary structure, heterodimer of an alpha and a beta chain. Post-translationally, contains one covalently linked phycocyanobilin chromophore. The chromophore is added by the phycocyanobilin lyase CpcUS.

It localises to the cellular thylakoid membrane. Its function is as follows. Light-harvesting photosynthetic bile pigment-protein from the phycobiliprotein complex. Allophycocyanin has a maximum absorption at approximately 650 nanometers. The chain is Allophycocyanin beta subunit (apcB) from Picosynechococcus sp. (strain ATCC 27264 / PCC 7002 / PR-6) (Agmenellum quadruplicatum).